We begin with the raw amino-acid sequence, 224 residues long: PKHD-type hydroxylase Tgr7_2199 (224 aa).

In terms of domain architecture, Fe2OG dioxygenase spans 78–176; that stretch reads KLSGAFFARY…RLVAVAWAES (99 aa). Fe cation is bound by residues His96, Asp98, and His157. Arg167 contacts 2-oxoglutarate.

The cofactor is Fe(2+). It depends on L-ascorbate as a cofactor.

This Thioalkalivibrio sulfidiphilus (strain HL-EbGR7) protein is PKHD-type hydroxylase Tgr7_2199.